Here is a 702-residue protein sequence, read N- to C-terminus: Polyphosphate kinase (702 aa).

N55 lines the ATP pocket. Mg(2+) contacts are provided by R389 and R419. H449 functions as the Phosphohistidine intermediate in the catalytic mechanism. Positions 482, 578, and 606 each coordinate ATP.

This sequence belongs to the polyphosphate kinase 1 (PPK1) family. The cofactor is Mg(2+). An intermediate of this reaction is the autophosphorylated ppk in which a phosphate is covalently linked to a histidine residue through a N-P bond.

The enzyme catalyses [phosphate](n) + ATP = [phosphate](n+1) + ADP. Catalyzes the reversible transfer of the terminal phosphate of ATP to form a long-chain polyphosphate (polyP). In Bacillus anthracis, this protein is Polyphosphate kinase.